Here is a 268-residue protein sequence, read N- to C-terminus: Aliphatic sulfonates import ATP-binding protein SsuB 3 (268 aa).

The disordered stretch occupies residues 1–27 (MTAAEAPLPPLAPRERTATTAAERRTG). The span at 13 to 26 (PRERTATTAAERRT) shows a compositional bias: basic and acidic residues. In terms of domain architecture, ABC transporter spans 32-247 (VSLSGVRKSF…DRNDPEALRY (216 aa)). 64–71 (GPSGTGKT) contacts ATP.

It belongs to the ABC transporter superfamily. Aliphatic sulfonates importer (TC 3.A.1.17.2) family. The complex is composed of two ATP-binding proteins (SsuB), two transmembrane proteins (SsuC) and a solute-binding protein (SsuA).

It is found in the cell membrane. It catalyses the reaction ATP + H2O + aliphatic sulfonate-[sulfonate-binding protein]Side 1 = ADP + phosphate + aliphatic sulfonateSide 2 + [sulfonate-binding protein]Side 1.. Its function is as follows. Part of the ABC transporter complex SsuABC involved in aliphatic sulfonates import. Responsible for energy coupling to the transport system. The protein is Aliphatic sulfonates import ATP-binding protein SsuB 3 of Rhodococcus jostii (strain RHA1).